Consider the following 114-residue polypeptide: Small ribosomal subunit protein bS6 (114 aa).

Belongs to the bacterial ribosomal protein bS6 family.

Its function is as follows. Binds together with bS18 to 16S ribosomal RNA. The sequence is that of Small ribosomal subunit protein bS6 from Bacteroides fragilis (strain YCH46).